The primary structure comprises 64 residues: Large ribosomal subunit protein uL29 (64 aa).

The protein belongs to the universal ribosomal protein uL29 family.

This chain is Large ribosomal subunit protein uL29, found in Verminephrobacter eiseniae (strain EF01-2).